The following is a 661-amino-acid chain: Immunoglobulin-like domain-containing receptor 2 (661 aa).

A signal peptide spans 1–35 (MPAFPTLDLDGKLGKMDRVVLGWTAVFWLTAMVEG). Residues 36 to 177 (LQVTVPDKKK…LEGKNEDSVE (142 aa)) form the Ig-like V-type domain. Over 36–201 (LQVTVPDKKK…PSFAVEIMPE (166 aa)) the chain is Lumenal. Residues Cys-57 and Cys-160 are joined by a disulfide bond. Residues 202 to 222 (WVFVGLVILGIFLFFVLVGIC) traverse the membrane as a helical segment. The Cytoplasmic portion of the chain corresponds to 223–661 (WCQCCPHSCC…DFPTRMSLVV (439 aa)). 3 disordered regions span residues 288 to 310 (LMDK…HSVR), 410 to 429 (EDRE…MLSR), and 453 to 661 (QRSR…SLVV). Basic and acidic residues-rich tracts occupy residues 410-428 (EDRE…EMLS) and 463-478 (HEAR…ESRA). Ser-487 carries the phosphoserine modification. Basic and acidic residues predominate over residues 491–506 (YYGRGRSREPPGDGER). Arg-559 is subject to Omega-N-methylarginine. Ser-594 is subject to Phosphoserine. Residues 595–607 (EGEDEDDAADEDA) show a composition bias toward acidic residues. Over residues 628 to 639 (RGRDLSFHSNSE) the composition is skewed to basic and acidic residues.

The protein belongs to the immunoglobulin superfamily. LISCH7 family. Interacts with MARVELD2 and OCLN. Interacts with P4HB and HSPA5; the interaction with HSPA5 stabilizes ILDR2 expression. Interacts (via C-terminus) with TRA2A, TRA2B and SRSF1. Expressed in epithelial tissues, mainly in liver, kidney and colon.

It localises to the endoplasmic reticulum membrane. The protein resides in the cell junction. It is found in the tight junction. The protein localises to the nucleus. Its function is as follows. May be involved in ER stress pathways with effects on lipid homeostasis and insulin secretion. With ILDR1 and LSR, involved in the maintain of the epithelial barrier function through the recruitment of MARVELD2/tricellulin to tricellular tight junctions. Also functions as a B7-like protein family member expressed on immune cells and inflamed tissue and with T-cell inhibitory activity. In the inner ear, may regulate alternative pre-mRNA splicing via binding to TRA2A, TRA2B and SRSF1. The sequence is that of Immunoglobulin-like domain-containing receptor 2 from Mus musculus (Mouse).